Consider the following 506-residue polypeptide: Pyruvate kinase 2 (506 aa).

Ser-24 is subject to Phosphoserine. Arg-51 is a binding site for substrate. 4 residues coordinate K(+): Asn-53, Ser-55, Asp-86, and Thr-87. 53–56 serves as a coordination point for ATP; sequence NFSH. The ATP site is built by Arg-93 and Lys-179. Glu-244 contributes to the Mg(2+) binding site. Residues Gly-267, Asp-268, and Thr-300 each contribute to the substrate site. Asp-268 provides a ligand contact to Mg(2+).

It belongs to the pyruvate kinase family. In terms of assembly, homotetramer. It depends on Mg(2+) as a cofactor. K(+) serves as cofactor.

The catalysed reaction is pyruvate + ATP = phosphoenolpyruvate + ADP + H(+). It functions in the pathway carbohydrate degradation; glycolysis; pyruvate from D-glyceraldehyde 3-phosphate: step 5/5. Its activity is regulated as follows. Not activated by fructose-1,6-bisphosphate. Functionally, may be used by cells under conditions in which the level of glycolytic flux is very low. This Saccharomyces cerevisiae (strain ATCC 204508 / S288c) (Baker's yeast) protein is Pyruvate kinase 2 (PYK2).